The primary structure comprises 540 residues: Aquaporin-5 (540 aa).

The segment at 1–224 (MSGEGTDLPT…ESIDGYNYES (224 aa)) is disordered. Residues 1–263 (MSGEGTDLPT…QWMNSNFKNH (263 aa)) are Cytoplasmic-facing. Polar residues predominate over residues 25 to 44 (PGSSQQQLVPIAHTISSPSK). Basic and acidic residues-rich tracts occupy residues 119-133 (RARE…EREN), 140-155 (RARD…ERSR), 174-194 (YFDD…KGMR), and 204-214 (SGEKVRRKSTD). The chain crosses the membrane as a helical span at residues 264–284 (FVATIGEFVGTTMFLFFAFAG). The Extracellular portion of the chain corresponds to 285 to 308 (TQVANIDSNTVNTTTGAATGFNIA). N296 is a glycosylation site (N-linked (GlcNAc...) asparagine). A helical transmembrane segment spans residues 309–329 (VQLYIAVIFGFSLMVNVWIFF). Topologically, residues 330 to 332 (RIS) are cytoplasmic. A helical membrane pass occupies residues 333 to 353 (GGLFNPAVTLGMVLVGAIPIP). Topologically, residues 354–356 (RAA) are extracellular. A helical transmembrane segment spans residues 357-377 (CLFFAQILGGIAASGMVLGLF). Topologically, residues 378 to 393 (PTTFNVRTTLGASTST) are cytoplasmic. Residues 394 to 414 (VQGVFIEAILTAELVFTIFML) form a helical membrane-spanning segment. Residues 415–420 (AKEKHK) are Extracellular-facing. A helical transmembrane segment spans residues 421-441 (ATFIAPVGIGLALFIAEMVGV). The Cytoplasmic segment spans residues 442 to 467 (YYTGGSLNPARSFGPCVVSGSFDKEH). Residues 468-488 (WIYWIGPITGTFIAVFFYKFI) traverse the membrane as a helical segment. Topologically, residues 489–540 (KMLEYEMANPGQDGDAKNDPTQNEKKREQILEERNRRYEKRNGSLRPGSRLS) are extracellular. Residues 499–540 (GQDGDAKNDPTQNEKKREQILEERNRRYEKRNGSLRPGSRLS) are disordered. A compositionally biased stretch (basic and acidic residues) spans 502–530 (GDAKNDPTQNEKKREQILEERNRRYEKRN). N530 carries N-linked (GlcNAc...) asparagine glycosylation.

Belongs to the MIP/aquaporin (TC 1.A.8) family.

The protein resides in the membrane. It carries out the reaction H2O(in) = H2O(out). Water channel required to facilitate the transport of water across membranes. May play a role in the vegetative growth. This Botryotinia fuckeliana (strain B05.10) (Noble rot fungus) protein is Aquaporin-5.